The sequence spans 325 residues: Acetyl-coenzyme A carboxylase carboxyl transferase subunit alpha (325 aa).

Positions 44–298 (QLEGRAEQLR…KTAILSNLEE (255 aa)) constitute a CoA carboxyltransferase C-terminal domain.

Belongs to the AccA family. Acetyl-CoA carboxylase is a heterohexamer composed of biotin carboxyl carrier protein (AccB), biotin carboxylase (AccC) and two subunits each of ACCase subunit alpha (AccA) and ACCase subunit beta (AccD).

Its subcellular location is the cytoplasm. It catalyses the reaction N(6)-carboxybiotinyl-L-lysyl-[protein] + acetyl-CoA = N(6)-biotinyl-L-lysyl-[protein] + malonyl-CoA. It functions in the pathway lipid metabolism; malonyl-CoA biosynthesis; malonyl-CoA from acetyl-CoA: step 1/1. In terms of biological role, component of the acetyl coenzyme A carboxylase (ACC) complex. First, biotin carboxylase catalyzes the carboxylation of biotin on its carrier protein (BCCP) and then the CO(2) group is transferred by the carboxyltransferase to acetyl-CoA to form malonyl-CoA. The chain is Acetyl-coenzyme A carboxylase carboxyl transferase subunit alpha from Acaryochloris marina (strain MBIC 11017).